The following is a 574-amino-acid chain: Proline--tRNA ligase (574 aa).

The protein belongs to the class-II aminoacyl-tRNA synthetase family. ProS type 1 subfamily. As to quaternary structure, homodimer.

The protein resides in the cytoplasm. The catalysed reaction is tRNA(Pro) + L-proline + ATP = L-prolyl-tRNA(Pro) + AMP + diphosphate. Its function is as follows. Catalyzes the attachment of proline to tRNA(Pro) in a two-step reaction: proline is first activated by ATP to form Pro-AMP and then transferred to the acceptor end of tRNA(Pro). As ProRS can inadvertently accommodate and process non-cognate amino acids such as alanine and cysteine, to avoid such errors it has two additional distinct editing activities against alanine. One activity is designated as 'pretransfer' editing and involves the tRNA(Pro)-independent hydrolysis of activated Ala-AMP. The other activity is designated 'posttransfer' editing and involves deacylation of mischarged Ala-tRNA(Pro). The misacylated Cys-tRNA(Pro) is not edited by ProRS. This is Proline--tRNA ligase from Nautilia profundicola (strain ATCC BAA-1463 / DSM 18972 / AmH).